Reading from the N-terminus, the 475-residue chain is Transcription factor EB (475 aa).

The tract at residues 1 to 52 is disordered; sequence MASRIGLRMQLMREQAQQEEQRERMQQQAVMHYMQQQQQQQQQLGGPPTPAI. Residues 1–166 form an interaction with ACSS2 region; the sequence is MASRIGLRMQ…DDVIDNIMRL (166 aa). A compositionally biased stretch (low complexity) spans 26-43; that stretch reads QQQAVMHYMQQQQQQQQQ. 4 positions are modified to phosphoserine: Ser108, Ser113, Ser121, and Ser137. A Nuclear export signal motif is present at residues 135-152; it reads GNSAPNSPMAMLHISSNP. A Phosphoserine; by MTOR modification is found at Ser141. The interval 155–164 is strong transcription activation domain; the sequence is EFDDVIDNIM. Phosphothreonine is present on Thr182. Position 210 is a phosphoserine; by MTOR (Ser210). An S-(2,3-dicarboxypropyl)cysteine modification is found at Cys211. The region spanning 234 to 287 is the bHLH domain; it reads QKKDNHNLIERRRRFNINDRIKELGMLIPKANDLDVRWNKGTILKASVDYIRRM. A Nuclear localization signal motif is present at residues 244 to 247; sequence RRRR. The segment at 297–318 is leucine-zipper; that stretch reads LENHSRRLEMTNKQLWLRIQEL. A Phosphoserine modification is found at Ser331. The disordered stretch occupies residues 351–429; that stretch reads SEDGPGEALM…HGSPFPNLSK (79 aa). The span at 380 to 389 shows a compositional bias: low complexity; sequence LPSAAQPQSP. Phosphoserine occurs at positions 422, 440, 465, 466, and 468. Residues 445-468 are compositionally biased toward low complexity; the sequence is ASDPLFSTMSPEASKASSRRSSFS. The segment at 445-475 is disordered; it reads ASDPLFSTMSPEASKASSRRSSFSMEEGDVL.

The protein belongs to the MiT/TFE family. Homodimer and heterodimer; with TFE3 or MITF. Interacts (when phosphorylated by MTOR) with YWHAZ; promoting retention in the cytosol. Interacts with Irgm1; promoting association between TFEB and PPP3CB and dephosphorylation. Interacts with small GTPases Rag (RagA/RRAGA, RagB/RRAGB, RagC/RRAGC and/or RagD/RRAGD); promoting its recruitment to lysosomal membrane in the presence of nutrients. Interacts with ACSS2. In terms of processing, phosphorylation at Ser-210 by MTOR via non-canonical mTORC1 pathway regulates its subcellular location and activity. When nutrients are present, phosphorylation by MTOR promotes association with 14-3-3/YWHA adapters and retention in the cytosol. Inhibition of mTORC1, starvation and lysosomal disruption, promotes dephosphorylation by calcineurin PPP3CB and translocation to the nucleus. Dephosphorylated by calcineurin PPP3CB in response to lysosomal Ca(2+) release. Irgm1 promotes dephosphorylation by calcineurin PPP3CB, resulting in TFEB nuclear translocation and stimulation of lysosomal biogenesis. Exported from the nucleus in a mTORC1-dependent manner in response to nutrient availability. Alkylated via a non-enzymatic covalent modification. Itaconate, an anti-inflammatory metabolite generated in response to lipopolysaccharide, alkylates Cys-211, preventing association with 14-3-3/YWHA adapters, thereby promoting nuclear translocation and activity. Post-translationally, sumoylated; does not affect dimerization with MITF. In terms of tissue distribution, widely expressed.

The protein resides in the nucleus. It is found in the cytoplasm. It localises to the cytosol. Its subcellular location is the lysosome membrane. Its function is as follows. Transcription factor that acts as a master regulator of lysosomal biogenesis, autophagy, lysosomal exocytosis, lipid catabolism, energy metabolism and immune response. Specifically recognizes and binds E-box sequences (5'-CANNTG-3'); efficient DNA-binding requires dimerization with itself or with another MiT/TFE family member such as TFE3 or MITF. Involved in the cellular response to amino acid availability by acting downstream of MTOR: in the presence of nutrients, TFEB phosphorylation by MTOR promotes its cytosolic retention and subsequent inactivation. Upon starvation or lysosomal stress, inhibition of MTOR induces TFEB dephosphorylation, resulting in nuclear localization and transcription factor activity. Specifically recognizes and binds the CLEAR-box sequence (5'-GTCACGTGAC-3') present in the regulatory region of many lysosomal genes, leading to activate their expression, thereby playing a central role in expression of lysosomal genes. Regulates lysosomal positioning in response to nutrient deprivation by promoting the expression of PIP4P1. Acts as a positive regulator of autophagy by promoting expression of genes involved in autophagy. In association with TFE3, activates the expression of CD40L in T-cells, thereby playing a role in T-cell-dependent antibody responses in activated CD4(+) T-cells and thymus-dependent humoral immunity. Specifically recognizes the gamma-E3 box, a subset of E-boxes, present in the heavy-chain immunoglobulin enhancer. Plays a role in the signal transduction processes required for normal vascularization of the placenta. Involved in the immune response to infection by the bacteria S.aureus, S.typhimurium or S.enterica. Infection promotes itaconate production, leading to alkylation, resulting in nuclear localization and transcription factor activity. Itaconate-mediated alkylation activates TFEB-dependent lysosomal biogenesis, facilitating the bacteria clearance during the antibacterial innate immune response. In association with ACSS2, promotes the expression of genes involved in lysosome biogenesis and both autophagy upon glucose deprivation. This chain is Transcription factor EB, found in Mus musculus (Mouse).